The primary structure comprises 796 residues: Peroxisome proliferator-activated receptor gamma coactivator 1-alpha (796 aa).

N6-acetyllysine is present on K77. The interval 98 to 138 is disordered; it reads PVDEDGLPSFDALTDGDVTTENEASPSSMPDGTPPPQEAEE. Polar residues predominate over residues 114–127; it reads DVTTENEASPSSMP. The LXXLL motif signature appears at 142–146; the sequence is LKKLL. K144 is modified (N6-acetyllysine). The residue at position 176 (T176) is a Phosphothreonine; by AMPK. K182 carries the post-translational modification N6-acetyllysine. The segment at 211–275 is disordered; sequence YLTTNDDPPH…NDPKGSPFEN (65 aa). Over residues 217–235 the composition is skewed to basic and acidic residues; it reads DPPHTKPTENRNSSRDKCT. Over residues 242-258 the composition is skewed to polar residues; sequence TQSQTQHLQAKPTTLSL. Residues K252, K269, K276, and K319 each carry the N6-acetyllysine modification. 2 disordered regions span residues 288 to 374 and 398 to 452; these read GTAG…AKRP and TSQE…RKQL. Positions 291-337 are interaction with PPARG; the sequence is GLTPPTTPPHKANQDNPFRASPKLKPSCKTVVPPPSKKARYSESSCT. Residues 332-344 show a composition bias toward polar residues; sequence SESSCTQGSNSTK. An N6-acetyllysine mark is found at K345 and K411. Positions 348-796 are mediates interaction with RNF34; it reads EQSELYAQLS…LKEAQRSLRR (449 aa). Over residues 401-412 the composition is skewed to basic and acidic residues; sequence ELHDSRQLENKD. 2 stretches are compositionally biased toward polar residues: residues 413–428 and 439–450; these read APSSNGPGQIHSSTDS and VSRQVSPGSTRK. Position 450 is an N6-acetyllysine (K450). S538 carries the post-translational modification Phosphoserine; by AMPK. Disordered stretches follow at residues 542-597, 609-637, and 648-667; these read FNSP…SSSR, HRTHRNSPLCASRSRSPHSRRPRYDSYEE, and YRREYEKRESERAKQRERQR. Basic residues predominate over residues 562–577; the sequence is QRMRSRSRSFSRHRSC. A compositionally biased stretch (low complexity) spans 578 to 597; it reads SRSPYSRSRSRSPGSRSSSR. Positions 675 to 751 constitute an RRM domain; the sequence is RVIYVGKIRP…TDFELYFCGR (77 aa). N6-acetyllysine is present on residues K756 and K777.

Homooligomer. Interacts with MYBBP1A; inhibits MYBBP1A transcriptional activation. Interacts with PRDM16, LPIN1 and PML. Interacts (via LXXLL motif) with RORA and RORC (via AF-2 motif); activates RORA and RORC transcriptional activation. Interacts with LRPPRC. Interacts with FOXO1. Interacts with NR5A2. In terms of processing, phosphorylation by AMPK in skeletal muscle increases activation of its own promoter. Phosphorylated by CLK2. Post-translationally, heavily acetylated by KAT2A/GCN5 under conditions of high nutrients, leading to inactivation of PPARGC1A. Deacetylated by SIRT1 in low nutrients/high NAD conditions, leading to its activation. Ubiquitinated. Ubiquitination by RNF34 induces proteasomal degradation.

Its subcellular location is the nucleus. It is found in the PML body. Transcriptional coactivator for steroid receptors and nuclear receptors. Greatly increases the transcriptional activity of PPARG and thyroid hormone receptor on the uncoupling protein promoter. Can regulate key mitochondrial genes that contribute to the program of adaptive thermogenesis. Plays an essential role in metabolic reprogramming in response to dietary availability through coordination of the expression of a wide array of genes involved in glucose and fatty acid metabolism. Acts as a key regulator of gluconeogenesis: stimulates hepatic gluconeogenesis by increasing the expression of gluconeogenic enzymes, and acting together with FOXO1 to promote the fasting gluconeogenic program. Induces the expression of PERM1 in the skeletal muscle in an ESRRA-dependent manner. Also involved in the integration of the circadian rhythms and energy metabolism. Required for oscillatory expression of clock genes, such as BMAL1 and NR1D1, through the coactivation of RORA and RORC, and metabolic genes, such as PDK4 and PEPCK. The chain is Peroxisome proliferator-activated receptor gamma coactivator 1-alpha (PPARGC1A) from Bos taurus (Bovine).